The following is a 152-amino-acid chain: Coiled-coil domain-containing protein 182 (152 aa).

Residues 46 to 109 (ADLEILQQKV…RLREEEDRGI (64 aa)) are a coiled coil.

This is Coiled-coil domain-containing protein 182 (Ccdc182) from Mus musculus (Mouse).